Consider the following 94-residue polypeptide: Integration host factor subunit beta (94 aa).

This sequence belongs to the bacterial histone-like protein family. Heterodimer of an alpha and a beta chain.

In terms of biological role, this protein is one of the two subunits of integration host factor, a specific DNA-binding protein that functions in genetic recombination as well as in transcriptional and translational control. This Buchnera aphidicola subsp. Acyrthosiphon pisum (strain 5A) protein is Integration host factor subunit beta.